A 234-amino-acid chain; its full sequence is Thymidylate kinase (234 aa).

11–18 (GLEGSGKT) contributes to the ATP binding site.

It belongs to the thymidylate kinase family.

The catalysed reaction is dTMP + ATP = dTDP + ADP. Its function is as follows. Phosphorylation of dTMP to form dTDP in both de novo and salvage pathways of dTTP synthesis. In Wigglesworthia glossinidia brevipalpis, this protein is Thymidylate kinase.